A 37-amino-acid polypeptide reads, in one-letter code: Large ribosomal subunit protein bL36 (37 aa).

This sequence belongs to the bacterial ribosomal protein bL36 family.

The sequence is that of Large ribosomal subunit protein bL36 from Geobacter metallireducens (strain ATCC 53774 / DSM 7210 / GS-15).